Consider the following 148-residue polypeptide: D-aminoacyl-tRNA deacylase (148 aa).

Positions 137 to 138 (GP) match the Gly-cisPro motif, important for rejection of L-amino acids motif.

It belongs to the DTD family. In terms of assembly, homodimer.

It localises to the cytoplasm. The catalysed reaction is glycyl-tRNA(Ala) + H2O = tRNA(Ala) + glycine + H(+). It catalyses the reaction a D-aminoacyl-tRNA + H2O = a tRNA + a D-alpha-amino acid + H(+). An aminoacyl-tRNA editing enzyme that deacylates mischarged D-aminoacyl-tRNAs. Also deacylates mischarged glycyl-tRNA(Ala), protecting cells against glycine mischarging by AlaRS. Acts via tRNA-based rather than protein-based catalysis; rejects L-amino acids rather than detecting D-amino acids in the active site. By recycling D-aminoacyl-tRNA to D-amino acids and free tRNA molecules, this enzyme counteracts the toxicity associated with the formation of D-aminoacyl-tRNA entities in vivo and helps enforce protein L-homochirality. The chain is D-aminoacyl-tRNA deacylase from Finegoldia magna (strain ATCC 29328 / DSM 20472 / WAL 2508) (Peptostreptococcus magnus).